The following is a 183-amino-acid chain: TATA-box-binding protein 1 (183 aa).

2 repeat units span residues 8-84 (IENV…AKKL) and 99-177 (VQNI…RQQL).

Belongs to the TBP family.

In terms of biological role, general factor that plays a role in the activation of archaeal genes transcribed by RNA polymerase. Binds specifically to the TATA box promoter element which lies close to the position of transcription initiation. The protein is TATA-box-binding protein 1 of Methanosarcina acetivorans (strain ATCC 35395 / DSM 2834 / JCM 12185 / C2A).